Here is a 122-residue protein sequence, read N- to C-terminus: Biogenesis of lysosome-related organelles complex 1 subunit BLS1 (122 aa).

S33 carries the post-translational modification Phosphoserine.

This sequence belongs to the BLOC1S1 family. Component of the biogenesis of lysosome-related organelles complex-1 (BLOC-1) composed of at least BLI1, BLS1, CNL1, KXD1, SNN1 and VAB2.

It is found in the endosome. Component of the biogenesis of lysosome-related organelles complex-1 (BLOC-1), a complex involved in endosomal cargo sorting. The chain is Biogenesis of lysosome-related organelles complex 1 subunit BLS1 (BLS1) from Saccharomyces cerevisiae (strain YJM789) (Baker's yeast).